We begin with the raw amino-acid sequence, 199 residues long: Probable nicotinate-nucleotide adenylyltransferase (199 aa).

The protein belongs to the NadD family.

The catalysed reaction is nicotinate beta-D-ribonucleotide + ATP + H(+) = deamido-NAD(+) + diphosphate. It functions in the pathway cofactor biosynthesis; NAD(+) biosynthesis; deamido-NAD(+) from nicotinate D-ribonucleotide: step 1/1. Catalyzes the reversible adenylation of nicotinate mononucleotide (NaMN) to nicotinic acid adenine dinucleotide (NaAD). This chain is Probable nicotinate-nucleotide adenylyltransferase, found in Roseiflexus sp. (strain RS-1).